The following is a 254-amino-acid chain: Cyclin homolog (254 aa).

The protein belongs to the cyclin family. Cyclin D subfamily.

In terms of biological role, may be highly relevant to the process of cellular transformation and rapid T-cell proliferation effected by HVS during latent infections of T-cells in susceptible hosts. This chain is Cyclin homolog (72), found in Saimiriine herpesvirus 2 (strain 11) (SaHV-2).